Consider the following 494-residue polypeptide: WD repeat-containing protein 37 (494 aa).

Composition is skewed to polar residues over residues 1–13 (MPTESASCSTARQ) and 22–31 (SLSIRRTNSS). Residues 1-50 (MPTESASCSTARQTKQKRKSHSLSIRRTNSSEQERTGLPRDMLEGQDSKL) form a disordered region. Positions 32-47 (EQERTGLPRDMLEGQD) are enriched in basic and acidic residues. WD repeat units lie at residues 154–194 (GHRD…CLVK) and 197–236 (GHVGSVNSIKFHPSEQLALTASGDQTAHIWRYAVQLPTPQ). The segment at 237–265 (PVADTSISGEDEVECSDKDEPDLDGDVSS) is disordered. A compositionally biased stretch (acidic residues) spans 245–263 (GEDEVECSDKDEPDLDGDV). 5 WD repeats span residues 279 to 318 (SHQGVVIASDWLVGGKQAVTASWDRTANLYDVETSELVHS), 321 to 360 (GHDQELTHCCTHPTQRLVVTSSRDTTFRLWDFRDPSIHSV), 365 to 403 (GHTDTVTSAVFTVGDNVVSGSDDRTVKVWDLKNMRSPIA), 406 to 445 (RTDSAINRINVCVGQKIIALPHDNRQVRLFDMSGVRLARL), and 452 to 493 (GHRR…LLQE).

As to quaternary structure, forms homodimers. Interacts with PACS1. Interacts with PACS2.

It is found in the cytoplasm. Its subcellular location is the nucleus. Required for normal ER Ca2+ handling in lymphocytes. Together with PACS1, it plays an essential role in stabilizing peripheral lymphocyte populations. The chain is WD repeat-containing protein 37 (WDR37) from Homo sapiens (Human).